Here is a 418-residue protein sequence, read N- to C-terminus: 1-deoxy-D-xylulose 5-phosphate reductoisomerase (418 aa).

Residues Thr32, Gly33, Ser34, Ile35, and Asn150 each contribute to the NADPH site. Position 151 (Lys151) interacts with 1-deoxy-D-xylulose 5-phosphate. Residue Glu152 participates in NADPH binding. Residue Asp174 coordinates Mn(2+). 1-deoxy-D-xylulose 5-phosphate contacts are provided by Ser175, Glu176, Ser200, and His223. Position 176 (Glu176) interacts with Mn(2+). Gly229 contributes to the NADPH binding site. The 1-deoxy-D-xylulose 5-phosphate site is built by Ser236, Asn241, Lys242, and Glu245. Mn(2+) is bound at residue Glu245.

It belongs to the DXR family. It depends on Mg(2+) as a cofactor. Mn(2+) is required as a cofactor.

The enzyme catalyses 2-C-methyl-D-erythritol 4-phosphate + NADP(+) = 1-deoxy-D-xylulose 5-phosphate + NADPH + H(+). It participates in isoprenoid biosynthesis; isopentenyl diphosphate biosynthesis via DXP pathway; isopentenyl diphosphate from 1-deoxy-D-xylulose 5-phosphate: step 1/6. In terms of biological role, catalyzes the NADPH-dependent rearrangement and reduction of 1-deoxy-D-xylulose-5-phosphate (DXP) to 2-C-methyl-D-erythritol 4-phosphate (MEP). The protein is 1-deoxy-D-xylulose 5-phosphate reductoisomerase of Streptomyces coelicolor (strain ATCC BAA-471 / A3(2) / M145).